The sequence spans 390 residues: Chorismate synthase 2 (390 aa).

Residues Arg-39 and Arg-45 each coordinate NADP(+). FMN-binding positions include 132 to 134, 253 to 254, Gly-298, 313 to 317, and Arg-339; these read RSS, NA, and KPIPT.

Belongs to the chorismate synthase family. In terms of assembly, homotetramer. FMNH2 is required as a cofactor.

The enzyme catalyses 5-O-(1-carboxyvinyl)-3-phosphoshikimate = chorismate + phosphate. It participates in metabolic intermediate biosynthesis; chorismate biosynthesis; chorismate from D-erythrose 4-phosphate and phosphoenolpyruvate: step 7/7. Functionally, catalyzes the anti-1,4-elimination of the C-3 phosphate and the C-6 proR hydrogen from 5-enolpyruvylshikimate-3-phosphate (EPSP) to yield chorismate, which is the branch point compound that serves as the starting substrate for the three terminal pathways of aromatic amino acid biosynthesis. This reaction introduces a second double bond into the aromatic ring system. The protein is Chorismate synthase 2 of Bacillus thuringiensis (strain Al Hakam).